The following is a 494-amino-acid chain: Transmembrane and coiled-coil domain-containing protein 6 (494 aa).

Residues 15 to 39 are a coiled coil; the sequence is GVEELRRRRREREAALRKARREQQL. 2 helical membrane passes run 338-358 and 386-406; these read LVAA…ALLP and PLLQ…TVLC.

Its subcellular location is the membrane. The protein is Transmembrane and coiled-coil domain-containing protein 6 (Tmco6) of Mus musculus (Mouse).